The primary structure comprises 360 residues: Photosystem II protein D1 (360 aa).

The next 3 membrane-spanning stretches (helical) occupy residues Y29–S46, H118–L133, and W142–A156. Position 118 (H118) interacts with chlorophyll a. Position 126 (Y126) interacts with pheophytin a. D170 and E189 together coordinate [CaMn4O5] cluster. A helical transmembrane segment spans residues F197–L218. Position 198 (H198) interacts with chlorophyll a. A quinone contacts are provided by residues H215 and S264–F265. H215 contacts Fe cation. A Fe cation-binding site is contributed by H272. The chain crosses the membrane as a helical span at residues F274–M288. 4 residues coordinate [CaMn4O5] cluster: H332, E333, D342, and A344. Positions S345 to G360 are excised as a propeptide.

It belongs to the reaction center PufL/M/PsbA/D family. In terms of assembly, PSII is composed of 1 copy each of membrane proteins PsbA, PsbB, PsbC, PsbD, PsbE, PsbF, PsbH, PsbI, PsbJ, PsbK, PsbL, PsbM, PsbT, PsbX, PsbY, PsbZ, Psb30/Ycf12, at least 3 peripheral proteins of the oxygen-evolving complex and a large number of cofactors. It forms dimeric complexes. The cofactor is The D1/D2 heterodimer binds P680, chlorophylls that are the primary electron donor of PSII, and subsequent electron acceptors. It shares a non-heme iron and each subunit binds pheophytin, quinone, additional chlorophylls, carotenoids and lipids. D1 provides most of the ligands for the Mn4-Ca-O5 cluster of the oxygen-evolving complex (OEC). There is also a Cl(-1) ion associated with D1 and D2, which is required for oxygen evolution. The PSII complex binds additional chlorophylls, carotenoids and specific lipids.. Tyr-161 forms a radical intermediate that is referred to as redox-active TyrZ, YZ or Y-Z. Post-translationally, C-terminally processed by CTPA; processing is essential to allow assembly of the oxygen-evolving complex and thus photosynthetic growth.

It localises to the plastid. The protein resides in the chloroplast thylakoid membrane. The enzyme catalyses 2 a plastoquinone + 4 hnu + 2 H2O = 2 a plastoquinol + O2. In terms of biological role, photosystem II (PSII) is a light-driven water:plastoquinone oxidoreductase that uses light energy to abstract electrons from H(2)O, generating O(2) and a proton gradient subsequently used for ATP formation. It consists of a core antenna complex that captures photons, and an electron transfer chain that converts photonic excitation into a charge separation. The D1/D2 (PsbA/PsbD) reaction center heterodimer binds P680, the primary electron donor of PSII as well as several subsequent electron acceptors. This chain is Photosystem II protein D1, found in Gracilaria tenuistipitata var. liui (Red alga).